We begin with the raw amino-acid sequence, 723 residues long: Beta-xylosidase (723 aa).

The N-terminal stretch at 1-19 (MKKLWLMGLLLASFFTTVA) is a signal peptide.

The protein belongs to the glycosyl hydrolase 3 family.

It localises to the periplasm. Its function is as follows. Xylosidase involved in ulvan degradation. Ulvan is the main polysaccharide component of the Ulvales (green seaweed) cell wall. It is composed of disaccharide building blocks comprising 3-sulfated rhamnose (Rha3S) linked to D-glucuronic acid (GlcA), L-iduronic acid (IduA), or D-xylose (Xyl). Beta-xylosidase converts Xyl-Rha3S, a product of alpha-L-rhamnosidase acting on Rha-Xyl-Rha3S oligosaccharides, further to Xyl and Rha3S. The enzyme is able to degrade 4-methylumbelliferyl-beta-D-xylopyranoside (MUX) in vitro. The polypeptide is Beta-xylosidase (Formosa agariphila (strain DSM 15362 / KCTC 12365 / LMG 23005 / KMM 3901 / M-2Alg 35-1)).